The primary structure comprises 406 residues: 2,3-bisphosphoglycerate-independent phosphoglycerate mutase (406 aa).

The protein belongs to the BPG-independent phosphoglycerate mutase family. A-PGAM subfamily.

It catalyses the reaction (2R)-2-phosphoglycerate = (2R)-3-phosphoglycerate. The protein operates within carbohydrate degradation; glycolysis; pyruvate from D-glyceraldehyde 3-phosphate: step 3/5. Functionally, catalyzes the interconversion of 2-phosphoglycerate and 3-phosphoglycerate. In Methanococcus vannielii (strain ATCC 35089 / DSM 1224 / JCM 13029 / OCM 148 / SB), this protein is 2,3-bisphosphoglycerate-independent phosphoglycerate mutase.